Consider the following 311-residue polypeptide: MSNSIVIQTNSTVIEDMKQQYKHSLSPKTPQGGIFMAKVPSCTITAYKSGKVMFQGGRAEAEASRWQTVSQTPKTAVKRSVDSHRYAPPASIGTMSIVGSDEVGTGDFFGPMTVVAVYVDAKQIPLLKELGVKDSKNLNDEQITAIAKQLLHVVPYSSLVLHNEKYNELFDKGNNQGKLKALLHNKAITNLLAKMAPIKPEGVLIDQFTQPDTYYKYLAKQKQVQRENVYFATKGESVHLAVAAASILARYSFVKQFNELSKKAGMPLPKGAGKQVDIAAAKLIQKLGKERLPEFVKLHFANTEKAFRLLK.

Residues 95–311 (MSIVGSDEVG…NTEKAFRLLK (217 aa)) enclose the RNase H type-2 domain. A divalent metal cation is bound by residues aspartate 101, glutamate 102, and aspartate 206.

This sequence belongs to the RNase HII family. RnhC subfamily. The cofactor is Mn(2+). Mg(2+) serves as cofactor.

The protein resides in the cytoplasm. It carries out the reaction Endonucleolytic cleavage to 5'-phosphomonoester.. Functionally, endonuclease that specifically degrades the RNA of RNA-DNA hybrids. The chain is Ribonuclease HIII from Bacillus cereus (strain AH187).